A 1378-amino-acid polypeptide reads, in one-letter code: Macrophage-stimulating protein receptor (1378 aa).

The N-terminal stretch at 1–23 is a signal peptide; sequence MGLPLPLLQSSLLLMLLLRLSAA. Residues 25–960 lie on the Extracellular side of the membrane; the sequence is TNLNWQCPRI…RSSPGRASQR (936 aa). The 492-residue stretch at 33-524 folds into the Sema domain; sequence RIPYAASRDF…SGDQVFKVPI (492 aa). The N-linked (GlcNAc...) asparagine glycan is linked to asparagine 91. Intrachain disulfides connect cysteine 102–cysteine 105, cysteine 108–cysteine 163, cysteine 136–cysteine 144, cysteine 175–cysteine 178, cysteine 301–cysteine 368, cysteine 386–cysteine 409, and cysteine 387–cysteine 424. N-linked (GlcNAc...) asparagine glycosylation is found at asparagine 391, asparagine 460, and asparagine 490. 4 disulfides stabilise this stretch: cysteine 529–cysteine 547, cysteine 535–cysteine 569, cysteine 538–cysteine 554, and cysteine 550–cysteine 560. IPT/TIG domains follow at residues 571–673, 686–769, and 772–864; these read PEIS…FRVE, PVLT…FHYK, and PIVL…FRFL. Residues asparagine 656, asparagine 722, asparagine 845, and asparagine 901 are each glycosylated (N-linked (GlcNAc...) asparagine). Residues 961–981 form a helical membrane-spanning segment; the sequence is ILLIALLVLILLVAVLAVALI. Over 982–1378 the chain is Cytoplasmic; the sequence is FNSRRRKKQL…RPLSEPPLPT (397 aa). Residues 1002–1026 are disordered; the sequence is SDINDTASGAPNHEESSESRDGTSV. Basic and acidic residues predominate over residues 1013–1022; the sequence is NHEESSESRD. The Protein kinase domain occupies 1059–1322; that stretch reads IHTDQVIGKG…ALVLEVKQVV (264 aa). Residues 1065 to 1073, lysine 1091, and 1138 to 1141 contribute to the ATP site; these read IGKGHFGVV and LPYM. Aspartate 1185 functions as the Proton acceptor in the catalytic mechanism. Residue arginine 1189 coordinates ATP. 4 positions are modified to phosphotyrosine; by autocatalysis: tyrosine 1215, tyrosine 1216, tyrosine 1330, and tyrosine 1337. The interval 1347-1378 is disordered; the sequence is DGSVPPEQVQPSPQHCRSTSKPRPLSEPPLPT. The span at 1349-1360 shows a compositional bias: low complexity; it reads SVPPEQVQPSPQ.

The protein belongs to the protein kinase superfamily. Tyr protein kinase family. As to quaternary structure, heterodimer of an alpha chain and a beta chain which are disulfide linked. Binds PLXNB1. Associates with and is negatively regulated by HYAL2. Interacts when phosphorylated with downstream effectors including PIK3R1, PCLG1, GRB2 and GAB1. Interacts with integrin beta1/ITGB1 in a ligand-independent fashion. Isoform sf-Stk forms covalent heterodimers with friend spleen focus-forming virus (FSFFV) gp55. Post-translationally, proteolytic processing yields the two subunits. In terms of processing, autophosphorylated in response to ligand binding on Tyr-1215 and Tyr-1216 in the kinase domain leading to further phosphorylation of Tyr-1330 and Tyr-1337 in the C-terminal multifunctional docking site. Ubiquitinated. Ubiquitination by CBL regulates the receptor stability and activity through proteasomal degradation. Post-translationally, O-mannosylation of IPT/TIG domains on Thr or Ser residues by TMEM260 is required for protein maturation. O-mannosylated residues are composed of single mannose glycans that are not elongated or modified. As to expression, expressed in liver, skin, lung, brain, testis and kidney.

The protein localises to the membrane. It catalyses the reaction L-tyrosyl-[protein] + ATP = O-phospho-L-tyrosyl-[protein] + ADP + H(+). With respect to regulation, in its inactive state, the C-terminal tail interacts with the catalytic domain and inhibits the kinase activity. Upon ligand binding, the C-terminal tail is displaced and becomes phosphorylated, thus increasing the kinase activity. Receptor tyrosine kinase that transduces signals from the extracellular matrix into the cytoplasm by binding to MST1 ligand. Regulates many physiological processes including cell survival, migration and differentiation. Ligand binding at the cell surface induces autophosphorylation of RON on its intracellular domain that provides docking sites for downstream signaling molecules. Following activation by ligand, interacts with the PI3-kinase subunit PIK3R1, PLCG1 or the adapter GAB1. Recruitment of these downstream effectors by RON leads to the activation of several signaling cascades including the RAS-ERK, PI3 kinase-AKT, or PLCgamma-PKC. RON signaling activates the wound healing response by promoting epithelial cell migration, proliferation as well as survival at the wound site. Also plays a role in the innate immune response by regulating the migration and phagocytic activity of macrophages. Alternatively, RON can also promote signals such as cell migration and proliferation in response to growth factors other than MST1 ligand. This is Macrophage-stimulating protein receptor (Mst1r) from Mus musculus (Mouse).